A 59-amino-acid chain; its full sequence is Large ribosomal subunit protein bL32 (59 aa).

The tract at residues 1–59 (MAVQQNKKSPSKRGMHRSHDFLTTAPIAVEPTTGEVHLRHHVSPNGYYRGRKVVKTKND) is disordered. Basic residues predominate over residues 49–59 (RGRKVVKTKND).

The protein belongs to the bacterial ribosomal protein bL32 family.

The protein is Large ribosomal subunit protein bL32 of Ralstonia pickettii (strain 12J).